We begin with the raw amino-acid sequence, 103 residues long: Carboxysome shell protein CsoS1 (103 aa).

The BMC domain occupies 9-94 (ALGMIETRGL…PHREVEPALG (86 aa)).

This sequence belongs to the bacterial microcompartments protein family. CsoS1 subfamily. In terms of assembly, homohexamer with a small central pore. Forms a CsoS2-CsoS1-RuBisCO complex.

Its subcellular location is the carboxysome. Its function is as follows. One of the shell proteins of the carboxysome, a polyhedral inclusion where RuBisCO (ribulose bisphosphate carboxylase, ccbL-ccbS) is sequestered. Assembles into hexamers which make sheets that form the facets of the polyhedral carboxysome. The protein is Carboxysome shell protein CsoS1 of Prochlorococcus marinus (strain MIT 9313).